A 162-amino-acid polypeptide reads, in one-letter code: Nucleotide-binding protein ACIAD3137 (162 aa).

The protein belongs to the YajQ family.

Its function is as follows. Nucleotide-binding protein. This is Nucleotide-binding protein ACIAD3137 from Acinetobacter baylyi (strain ATCC 33305 / BD413 / ADP1).